We begin with the raw amino-acid sequence, 167 residues long: uncharacterized protein (167 aa).

The N-acetyltransferase domain occupies 1-148 (MLIRVEIPID…SAFQVHRLAD (148 aa)).

It belongs to the acetyltransferase family.

This is an uncharacterized protein from Escherichia coli O157:H7.